Consider the following 399-residue polypeptide: Ribonucleoside-diphosphate reductase small chain 1 (399 aa).

Phosphoserine is present on residues Ser15, Ser24, and Ser41. Residues Asp145, Glu176, and His179 each contribute to the Fe cation site. The active site involves Tyr183. The Fe cation site is built by Glu239, Glu273, and His276.

This sequence belongs to the ribonucleoside diphosphate reductase small chain family. In terms of assembly, heterotetramer of two large (R1) and two small (R2) subunits. S.cerevisiae has two different R1 subunits (RNR1 and RNR3) and two different R2 subunits (RNR2 and RNR4). The functional form of the small subunits is a RNR2-RNR4 heterodimer, where RNR2 provides the iron-radical center and RNR4 is required for proper folding of RNR2 and assembly with the large subunits. Under normal growth conditions, the active form of the large subunits is a homodimer of the constitutively expressed RNR1. In damaged cells or cells arrested for DNA synthesis, the reductase consists of multiple species because of the association of the small subunits (RNR2-RNR4) with either the RNR1 homodimer or a heterodimer of RNR1 and the damage-inducible RNR3. Interacts with DIF1. Requires Fe cation as cofactor.

It is found in the nucleus. The enzyme catalyses a 2'-deoxyribonucleoside 5'-diphosphate + [thioredoxin]-disulfide + H2O = a ribonucleoside 5'-diphosphate + [thioredoxin]-dithiol. Functionally, provides the precursors necessary for DNA synthesis. Catalyzes the biosynthesis of deoxyribonucleotides from the corresponding ribonucleotides. RNR2 provides the diiron-tyrosyl radical center. The chain is Ribonucleoside-diphosphate reductase small chain 1 (RNR2) from Saccharomyces cerevisiae (strain ATCC 204508 / S288c) (Baker's yeast).